A 623-amino-acid chain; its full sequence is Ciliated left-right organizer metallopeptidase (623 aa).

The signal sequence occupies residues Met1–Gly20. The Extracellular portion of the chain corresponds to Lys21–Ser578. Zn(2+) is bound at residue His249. Glu250 is a catalytic residue. His253 and His326 together coordinate Zn(2+). The chain crosses the membrane as a helical span at residues Leu579–Tyr599. The Cytoplasmic portion of the chain corresponds to Arg600–Asn623.

It belongs to the peptidase M8 family. Zn(2+) serves as cofactor. Expressed specifically in dorsal forerunner cells (DFCs) that form a ciliated Kupffer's vesicle later.

It is found in the membrane. Functionally, plays an essential role for patterning the left-right axis. Requires solely on the left side, downstream of the leftward flow, but upstream of dand5, a nodal inhibitor involved in left-right patterning. This is Ciliated left-right organizer metallopeptidase (cirop) from Danio rerio (Zebrafish).